The following is a 218-amino-acid chain: MNQSLLSEFGTPEQRVTHAIEALRAGRGVMVLDDEDRENEGDMIFAAETMTVEQMALTIRHGSGIVCLCLNEERLEQLDLPMMVQNNTSAYGTGFTVTIEAAEGVTTGVSATDRLTTIRAAIADDARPSDLNRPGHVFPLRARSGGVLTRGGHTEATLDLVTLAGFKPAGVLCELTNDDGSMAHAPEVIVFARQHDMPVVTIEDLVSYRRSRETLQAS.

Residues 37–38 (RE), aspartate 42, 150–154 (RGGHT), and glutamate 174 contribute to the D-ribulose 5-phosphate site. Glutamate 38 is a binding site for Mg(2+). Histidine 153 contributes to the Mg(2+) binding site.

Belongs to the DHBP synthase family. Homodimer. Mg(2+) serves as cofactor. Mn(2+) is required as a cofactor.

It catalyses the reaction D-ribulose 5-phosphate = (2S)-2-hydroxy-3-oxobutyl phosphate + formate + H(+). It participates in cofactor biosynthesis; riboflavin biosynthesis; 2-hydroxy-3-oxobutyl phosphate from D-ribulose 5-phosphate: step 1/1. Catalyzes the conversion of D-ribulose 5-phosphate to formate and 3,4-dihydroxy-2-butanone 4-phosphate. The sequence is that of 3,4-dihydroxy-2-butanone 4-phosphate synthase from Erwinia tasmaniensis (strain DSM 17950 / CFBP 7177 / CIP 109463 / NCPPB 4357 / Et1/99).